The following is a 619-amino-acid chain: MAASPGSGSANPRKFSEKIALHTQRQAEETRAFEQLMTDLTLSRVQFQKLQQLRLTQYHGGSLPNVSQLRSSASEFQPSFHQADNVRGTRHHGLVERPSRNRFHPLHRRSGDKPGRQFDGSAFGANYSSQPLDESWPRQQPPWKDEKHPGFRLTSALNRTNSDSALHTSALSTKPQDPYGGGGQSAWPAPYMGFCDGENNGHGEVASFPGPLKEENLLNVPKPLPKQLWETKEIQSLSGRPRSCDVGGGNAFPHNGQNLGLSPFLGTLNTGGSLPDLTNLHYSTPLPASLDTTDHHFGSMSVGNSVNNIPAAMTHLGIRSSSGLQSSRSNPSIQATLNKTVLSSSLNNHPQTSVPNASALHPSLRLFSLSNPSLSTTNLSGPSRRRQPPVSPLTLSPGPEAHQGFSRQLSSTSPLAPYPTSQMVSSDRSQLSFLPTEAQAQVSPPPPYPAPQELTQPLLQQPRAPEAPAQQPQAASSLPQSDFQLLPAQGSSLTNFFPDVGFDQQSMRPGPAFPQQVPLVQQGSRELQDSFHLRPSPYSNCGSLPNTILPEDSSTSLFKDLNSALAGLPEVSLNVDTPFPLEEELQIEPLSLDGLNMLSDSSMGLLDPSVEETFRADRL.

Residues 1–103 (MAASPGSGSA…LVERPSRNRF (103 aa)) are required for interaction with HTLV-1 TAX. A phosphoserine mark is found at serine 4 and serine 62. Residues 103–150 (FHPLHRRSGDKPGRQFDGSAFGANYSSQPLDESWPRQQPPWKDEKHPG) are disordered. Threonine 160 carries the phosphothreonine modification. Position 162 is a phosphoserine; by SIK2 (serine 162). Residues 165–175 (ALHTSALSTKP) are compositionally biased toward polar residues. Residues 165 to 185 (ALHTSALSTKPQDPYGGGGQS) form a disordered region. Residue lysine 232 forms a Glycyl lysine isopeptide (Lys-Gly) (interchain with G-Cter in SUMO2) linkage. Phosphoserine occurs at positions 273, 329, 332, 370, 391, 396, 410, and 443. The disordered stretch occupies residues 375–431 (STTNLSGPSRRRQPPVSPLTLSPGPEAHQGFSRQLSSTSPLAPYPTSQMVSSDRSQL). A required for interaction with PPP2CA and PPP2R1A region spans residues 380-401 (SGPSRRRQPPVSPLTLSPGPEA). The segment covering 405 to 431 (FSRQLSSTSPLAPYPTSQMVSSDRSQL) has biased composition (polar residues).

This sequence belongs to the TORC family. Binding, as a tetramer, through its N-terminal region, with the bZIP domain of CREB1 enhances recruitment of TAF4 to the promoter. 'Arg-314' in the bZIP domain of CREB1 is essential for this interaction. Interacts (when phosphorylated at Ser-162 and Se-273) with 14-3-3 proteins. Interacts with YWHAE. Interacts (when phosphorylated at Ser-391) with phosphatase PP2A catalytic subunit PPP2CA and regulatory subunits PPP2R1A and PPP2R2A. Interacts, via the N-terminal with the ankyrin repeats of BCL3, to form a complex with CREB1 on CRE and TxRE responsive elements and represses HTLV-1 LTR-mediated transcription. In terms of assembly, (Microbial infection) Interacts with HTLV-1 protein Tax; this interaction enhances tax transcriptional activity. Post-translationally, phosphorylation/dephosphorylation states of Ser-273 are required for regulating transduction of CREB activity. CRTCs/TORCs are inactive when phosphorylated, and active when dephosphorylated at this site. May be phosphorylated at Ser-391 by MAPK3/ERK1 and/or MAPK1/ERK2 or by some cyclin-dependent kinases such as CDK1,CDK2 or CDK5. Following adenylyl cyclase activation, dephosphorylated at Ser-162 and Ser-273 resulting in its dissociation from 14-3-3 proteins probably promoting CRTC3 translocation into the nucleus. Predominantly expressed in B and T lymphocytes. Highest levels in lung. Also expressed in brain, colon, heart, kidney, ovary, and prostate. Weak expression in liver, pancreas, muscle, small intestine, spleen and stomach.

The protein resides in the nucleus. It localises to the cytoplasm. Functionally, transcriptional coactivator for CREB1 which activates transcription through both consensus and variant cAMP response element (CRE) sites. Acts as a coactivator, in the SIK/TORC signaling pathway, being active when dephosphorylated and acts independently of CREB1 'Ser-133' phosphorylation. Enhances the interaction of CREB1 with TAF4. Regulates the expression of specific CREB-activated genes such as the steroidogenic gene, StAR. Potent coactivator of PPARGC1A and inducer of mitochondrial biogenesis in muscle cells. Also coactivator for TAX activation of the human T-cell leukemia virus type 1 (HTLV-1) long terminal repeats (LTR). The sequence is that of CREB-regulated transcription coactivator 3 (CRTC3) from Homo sapiens (Human).